The following is a 398-amino-acid chain: MRSGGTLFALIGSLMLLLLLRMLWCPADAPARSRLLMEGSREDTSGTSAALKTLWSPTTPVPRTRNSTYLDEKTTQITEKCKDLQYSLNSLSNKTRRYSEDDYLQTITNIQRCPWNRQAEEYDNFRAKLASCCDAIQDFVVSQNNTPVGTNMSYEVESKKHIPIRENIFHMFPVSQPFVDYPYNQCAVVGNGGILNKSLCGAEIDKSDFVFRCNLPPITGSASKDVGSKTNLVTVNPSIITLKYQNLKEKKAQFLEDISTYGDAFLLLPAFSYRANTGISFKVYQTLKESKMRQKVLFFHPRYLRHLALFWRTKGVTAYRLSTGLMIASVAVELCENVKLYGFWPFSKTIEDTPLSHHYYDNMLPKHGFHQMPKEYSQMLQLHMRGILKLQFSKCETA.

Residues 1-3 (MRS) lie on the Cytoplasmic side of the membrane. A helical; Signal-anchor for type II membrane protein membrane pass occupies residues 4-24 (GGTLFALIGSLMLLLLLRMLW). At 25–398 (CPADAPARSR…KLQFSKCETA (374 aa)) the chain is on the lumenal side. Residues asparagine 66, asparagine 93, asparagine 151, and asparagine 196 are each glycosylated (N-linked (GlcNAc...) asparagine). Intrachain disulfides connect cysteine 186–cysteine 335 and cysteine 200–cysteine 395. Substrate contacts are provided by residues asparagine 214, 236-238 (NPS), and 322-324 (STG). Histidine 370 serves as the catalytic Proton donor/acceptor.

This sequence belongs to the glycosyltransferase 29 family. As to expression, highly expressed in kidney and expressed and all tissues tested.

Its subcellular location is the golgi apparatus membrane. The catalysed reaction is a ganglioside GM3 + CMP-N-acetyl-beta-neuraminate = a ganglioside GD3 + CMP + H(+). The enzyme catalyses a ganglioside GM3 (d18:1(4E)) + CMP-N-acetyl-beta-neuraminate = a ganglioside GD3 (d18:1(4E)) + CMP + H(+). It catalyses the reaction a ganglioside GD1a (d18:1(4E)) + CMP-N-acetyl-beta-neuraminate = a ganglioside GT1a (d18:1(4E)) + CMP + H(+). It carries out the reaction a ganglioside GD1a + CMP-N-acetyl-beta-neuraminate = a ganglioside GT1a + CMP + H(+). The catalysed reaction is a ganglioside GM1b (d18:1(4E)) + CMP-N-acetyl-beta-neuraminate = a ganglioside GD1c (d18:1(4E)) + CMP + H(+). The enzyme catalyses a ganglioside GM1b + CMP-N-acetyl-beta-neuraminate = a ganglioside GD1c + CMP + H(+). It catalyses the reaction a ganglioside GM4 (d18:1(4E)) + CMP-N-acetyl-beta-neuraminate = an N-acetyl-alpha-neuraminosyl-(2-&gt;8)-N-acetyl-alpha-neuraminosyl-(2-&gt;3)-beta-D-galactosyl-(1&lt;-&gt;1')-N-acylsphing-4-enine + CMP + H(+). It carries out the reaction N-acetyl-alpha-neuraminosyl-(2-&gt;3)-beta-D-galactosyl-(1&lt;-&gt;1')-ceramide + CMP-N-acetyl-beta-neuraminate = N-acetyl-alpha-neuraminosyl-(2-&gt;8)-N-acetyl-alpha-neuraminosyl-(2-&gt;3)-beta-D-galactosyl-(1&lt;-&gt;1')-ceramide + CMP + H(+). The catalysed reaction is a ganglioside GT1b (d18:1(4E)) + CMP-N-acetyl-beta-neuraminate = a ganglioside GQ1b (d18:1(4E)) + CMP + H(+). The enzyme catalyses a ganglioside GT1b + CMP-N-acetyl-beta-neuraminate = a ganglioside GQ1b + CMP + H(+). The protein operates within protein modification; protein glycosylation. Its function is as follows. Alpha-2,8-sialyltransferase that prefers O-glycans to N-glycans or glycolipids as acceptor substrates. The minimal acceptor substrate is the NeuAc-alpha-2,3(6)-Gal sequence at the non-reducing end of their carbohydrate groups. The sequence is that of Alpha-2,8-sialyltransferase 8F from Mus musculus (Mouse).